Reading from the N-terminus, the 210-residue chain is Riboflavin kinase (210 aa).

Residues 1-11 (MRPSNPRPPVT) are compositionally biased toward pro residues. The tract at residues 1-24 (MRPSNPRPPVTGPDSGPEAPFPIR) is disordered. Residues threonine 44 and asparagine 46 each contribute to the Mg(2+) site. Glutamate 113 functions as the Nucleophile in the catalytic mechanism.

The protein belongs to the flavokinase family. It depends on Zn(2+) as a cofactor. The cofactor is Mg(2+).

It carries out the reaction riboflavin + ATP = FMN + ADP + H(+). It functions in the pathway cofactor biosynthesis; FMN biosynthesis; FMN from riboflavin (ATP route): step 1/1. Its function is as follows. Catalyzes the phosphorylation of riboflavin (vitamin B2) to form flavin mononucleotide (FMN) coenzyme. The protein is Riboflavin kinase (fmn1) of Emericella nidulans (strain FGSC A4 / ATCC 38163 / CBS 112.46 / NRRL 194 / M139) (Aspergillus nidulans).